The following is a 97-amino-acid chain: SAGA-associated factor 11 (97 aa).

The segment at 70-91 adopts an SGF11-type zinc-finger fold; it reads IECNVCGREVSGNRFAAHLVRC.

It belongs to the SGF11 family. Component of the 1.8 MDa SAGA transcription coactivator-HAT complex. SAGA is built of 5 distinct domains with specialized functions. Within the SAGA complex, SUS1, SGF11, SGF73 and UBP8 form an additional subcomplex of SAGA called the DUB module (deubiquitination module). Interacts directly with SGF73, SUS1 and UBP8.

Its subcellular location is the nucleus. Functionally, functions as a component of the transcription regulatory histone acetylation (HAT) complex SAGA. At the promoters, SAGA is required for recruitment of the basal transcription machinery. It influences RNA polymerase II transcriptional activity through different activities such as TBP interaction and promoter selectivity, interaction with transcription activators, and chromatin modification through histone acetylation and deubiquitination. SAGA acetylates nucleosomal histone H3 to some extent (to form H3K9ac, H3K14ac, H3K18ac and H3K23ac). SAGA interacts with DNA via upstream activating sequences (UASs). Involved in transcriptional regulation of a subset of SAGA-regulated genes. Within the SAGA complex, participates in a subcomplex, that specifically deubiquitinates histones H2B. In Kluyveromyces lactis (strain ATCC 8585 / CBS 2359 / DSM 70799 / NBRC 1267 / NRRL Y-1140 / WM37) (Yeast), this protein is SAGA-associated factor 11.